Consider the following 152-residue polypeptide: Large ribosomal subunit protein bL9 (152 aa).

The protein belongs to the bacterial ribosomal protein bL9 family.

Its function is as follows. Binds to the 23S rRNA. This Nostoc punctiforme (strain ATCC 29133 / PCC 73102) protein is Large ribosomal subunit protein bL9.